A 179-amino-acid chain; its full sequence is Small heat shock protein hspK (179 aa).

One can recognise a sHSP domain in the interval 32 to 178; sequence HRINIWRPTV…DRLKIPIQSK (147 aa). A disordered region spans residues 80-122; that stretch reads KKSKGGLNNLPSSSSSINSDSTTNTNTNTTTTTTTAPPPPSDA. Residues 87-114 show a composition bias toward low complexity; the sequence is NNLPSSSSSINSDSTTNTNTNTTTTTTT.

This sequence belongs to the small heat shock protein (HSP20) family.

This chain is Small heat shock protein hspK (hspK), found in Dictyostelium discoideum (Social amoeba).